A 449-amino-acid polypeptide reads, in one-letter code: Adenylosuccinate synthetase (449 aa).

GTP contacts are provided by residues 12-18 (GDEGKGK) and 40-42 (GHT). The active-site Proton acceptor is the Asp13. Mg(2+)-binding residues include Asp13 and Gly40. IMP-binding positions include 13-16 (DEGK), 38-41 (NAGH), Thr128, Arg142, Gln223, Thr238, and Arg302. The Proton donor role is filled by His41. 298–304 (TTTGRRR) contacts substrate. GTP-binding positions include Arg304, 330-332 (KLD), and 412-414 (SLG).

It belongs to the adenylosuccinate synthetase family. As to quaternary structure, homodimer. Requires Mg(2+) as cofactor.

The protein resides in the cytoplasm. It carries out the reaction IMP + L-aspartate + GTP = N(6)-(1,2-dicarboxyethyl)-AMP + GDP + phosphate + 2 H(+). Its pathway is purine metabolism; AMP biosynthesis via de novo pathway; AMP from IMP: step 1/2. Functionally, plays an important role in the de novo pathway of purine nucleotide biosynthesis. Catalyzes the first committed step in the biosynthesis of AMP from IMP. In Gloeothece citriformis (strain PCC 7424) (Cyanothece sp. (strain PCC 7424)), this protein is Adenylosuccinate synthetase.